The chain runs to 281 residues: Elongation factor Ts (281 aa).

Positions 80–83 (TDFV) are involved in Mg(2+) ion dislocation from EF-Tu.

It belongs to the EF-Ts family.

It localises to the cytoplasm. Associates with the EF-Tu.GDP complex and induces the exchange of GDP to GTP. It remains bound to the aminoacyl-tRNA.EF-Tu.GTP complex up to the GTP hydrolysis stage on the ribosome. In Aliivibrio fischeri (strain MJ11) (Vibrio fischeri), this protein is Elongation factor Ts.